A 732-amino-acid chain; its full sequence is uncharacterized protein (732 aa).

A run of 2 helical transmembrane segments spans residues Tyr-687–Leu-707 and Gly-712–Ser-732.

The protein belongs to the FadG family.

It localises to the cell membrane. This is an uncharacterized protein from Bacillus subtilis (strain 168).